The chain runs to 267 residues: Glucosamine-6-phosphate deaminase (267 aa).

Catalysis depends on aspartate 72, which acts as the Proton acceptor; for enolization step. Residue aspartate 141 is the For ring-opening step of the active site. Catalysis depends on histidine 143, which acts as the Proton acceptor; for ring-opening step. Glutamate 148 (for ring-opening step) is an active-site residue.

The protein belongs to the glucosamine/galactosamine-6-phosphate isomerase family. NagB subfamily. In terms of assembly, homohexamer.

It carries out the reaction alpha-D-glucosamine 6-phosphate + H2O = beta-D-fructose 6-phosphate + NH4(+). It participates in amino-sugar metabolism; N-acetylneuraminate degradation; D-fructose 6-phosphate from N-acetylneuraminate: step 5/5. Allosterically activated by N-acetylglucosamine 6-phosphate (GlcNAc6P). In terms of biological role, catalyzes the reversible isomerization-deamination of glucosamine 6-phosphate (GlcN6P) to form fructose 6-phosphate (Fru6P) and ammonium ion. This is Glucosamine-6-phosphate deaminase from Haemophilus ducreyi (strain 35000HP / ATCC 700724).